A 358-amino-acid polypeptide reads, in one-letter code: Photosystem II protein D1 1 (358 aa).

3 helical membrane passes run 28 to 45, 117 to 132, and 141 to 155; these read YVGW…AATI, HFLI…QWEL, and WICV…AAFA. Position 117 (H117) interacts with chlorophyll a. Y125 contacts pheophytin a. Positions 169 and 188 each coordinate [CaMn4O5] cluster. Residues 196–217 form a helical membrane-spanning segment; the sequence is FHMLGVAGVFGGSLFSAMHGSL. H197 contacts chlorophyll a. A quinone contacts are provided by residues H214 and 263-264; that span reads SF. Residue H214 coordinates Fe cation. H271 is a Fe cation binding site. Residues 273–287 form a helical membrane-spanning segment; the sequence is FLGAWPVIGIWFTSM. H331, E332, D341, and A343 together coordinate [CaMn4O5] cluster. A propeptide spanning residues 344–358 is cleaved from the precursor; it reads AAESTPVALQAPAIG.

Belongs to the reaction center PufL/M/PsbA/D family. In terms of assembly, PSII is composed of 1 copy each of membrane proteins PsbA, PsbB, PsbC, PsbD, PsbE, PsbF, PsbH, PsbI, PsbJ, PsbK, PsbL, PsbM, PsbT, PsbX, PsbY, PsbZ, Psb30/Ycf12, peripheral proteins PsbO, CyanoQ (PsbQ), PsbU, PsbV and a large number of cofactors. It forms dimeric complexes. The D1/D2 heterodimer binds P680, chlorophylls that are the primary electron donor of PSII, and subsequent electron acceptors. It shares a non-heme iron and each subunit binds pheophytin, quinone, additional chlorophylls, carotenoids and lipids. D1 provides most of the ligands for the Mn4-Ca-O5 cluster of the oxygen-evolving complex (OEC). There is also a Cl(-1) ion associated with D1 and D2, which is required for oxygen evolution. The PSII complex binds additional chlorophylls, carotenoids and specific lipids. is required as a cofactor. In terms of processing, tyr-160 forms a radical intermediate that is referred to as redox-active TyrZ, YZ or Y-Z. C-terminally processed by CtpA; processing is essential to allow assembly of the oxygen-evolving complex and thus photosynthetic growth.

The protein localises to the cellular thylakoid membrane. The catalysed reaction is 2 a plastoquinone + 4 hnu + 2 H2O = 2 a plastoquinol + O2. Functionally, photosystem II (PSII) is a light-driven water:plastoquinone oxidoreductase that uses light energy to abstract electrons from H(2)O, generating O(2) and a proton gradient subsequently used for ATP formation. It consists of a core antenna complex that captures photons, and an electron transfer chain that converts photonic excitation into a charge separation. The D1/D2 (PsbA/PsbD) reaction center heterodimer binds P680, the primary electron donor of PSII as well as several subsequent electron acceptors. The sequence is that of Photosystem II protein D1 1 from Synechococcus sp. (strain CC9902).